The chain runs to 449 residues: Trigger factor (449 aa).

Residues 172–257 form the PPIase FKBP-type domain; the sequence is GDRVTVDFVG…LKQVEWAHLP (86 aa).

It belongs to the FKBP-type PPIase family. Tig subfamily.

It localises to the cytoplasm. It catalyses the reaction [protein]-peptidylproline (omega=180) = [protein]-peptidylproline (omega=0). Its function is as follows. Involved in protein export. Acts as a chaperone by maintaining the newly synthesized protein in an open conformation. Functions as a peptidyl-prolyl cis-trans isomerase. The sequence is that of Trigger factor from Ralstonia nicotianae (strain ATCC BAA-1114 / GMI1000) (Ralstonia solanacearum).